A 368-amino-acid polypeptide reads, in one-letter code: Alanine racemase (368 aa).

The active-site Proton acceptor; specific for D-alanine is the K34. An N6-(pyridoxal phosphate)lysine modification is found at K34. R132 provides a ligand contact to substrate. The active-site Proton acceptor; specific for L-alanine is the Y261. M309 serves as a coordination point for substrate.

The protein belongs to the alanine racemase family. Pyridoxal 5'-phosphate is required as a cofactor.

It carries out the reaction L-alanine = D-alanine. The protein operates within amino-acid biosynthesis; D-alanine biosynthesis; D-alanine from L-alanine: step 1/1. Functionally, catalyzes the interconversion of L-alanine and D-alanine. May also act on other amino acids. This chain is Alanine racemase (alr), found in Carboxydothermus hydrogenoformans (strain ATCC BAA-161 / DSM 6008 / Z-2901).